The chain runs to 138 residues: MLIPRRVKHRKQHHPGRSGAATGGTKVSFGEWGIQALSPAYVTNRQIESARIAMTRHIKRGGKVWINIYPDRPLTKKPAETRMGSGKGSPEWWVSNVKPGRVLFELSGVSEEVAREALRLAIHKLPLKARIVRREGGE.

The segment covering Met1–Gly16 has biased composition (basic residues). The tract at residues Met1–Gly24 is disordered.

It belongs to the universal ribosomal protein uL16 family. As to quaternary structure, part of the 50S ribosomal subunit.

In terms of biological role, binds 23S rRNA and is also seen to make contacts with the A and possibly P site tRNAs. This is Large ribosomal subunit protein uL16 from Arthrobacter sp. (strain FB24).